Here is a 125-residue protein sequence, read N- to C-terminus: Large ribosomal subunit protein bL20 (125 aa).

Belongs to the bacterial ribosomal protein bL20 family.

Binds directly to 23S ribosomal RNA and is necessary for the in vitro assembly process of the 50S ribosomal subunit. It is not involved in the protein synthesizing functions of that subunit. In Zymomonas mobilis subsp. mobilis (strain ATCC 31821 / ZM4 / CP4), this protein is Large ribosomal subunit protein bL20.